The following is a 554-amino-acid chain: CTP synthase (554 aa).

The amidoligase domain stretch occupies residues 1-279 (MTSSRKVRPT…DTFIIRRLGL (279 aa)). Ser-21 contacts CTP. Ser-21 contributes to the UTP binding site. ATP-binding positions include 22–27 (SLGKGL) and Asp-79. The Mg(2+) site is built by Asp-79 and Glu-153. Residues 160–162 (DIE), 200–205 (KTKPTQ), and Lys-236 contribute to the CTP site. Residues 200-205 (KTKPTQ) and Lys-236 each bind UTP. The region spanning 304–553 (TVGIVGKYID…VKTALELRVH (250 aa)) is the Glutamine amidotransferase type-1 domain. Position 367 (Gly-367) interacts with L-glutamine. The Nucleophile; for glutamine hydrolysis role is filled by Cys-394. Residues 395–398 (LGLQ), Glu-417, and Arg-478 contribute to the L-glutamine site. Catalysis depends on residues His-526 and Glu-528.

The protein belongs to the CTP synthase family. Homotetramer.

The enzyme catalyses UTP + L-glutamine + ATP + H2O = CTP + L-glutamate + ADP + phosphate + 2 H(+). The catalysed reaction is L-glutamine + H2O = L-glutamate + NH4(+). It catalyses the reaction UTP + NH4(+) + ATP = CTP + ADP + phosphate + 2 H(+). It functions in the pathway pyrimidine metabolism; CTP biosynthesis via de novo pathway; CTP from UDP: step 2/2. Allosterically activated by GTP, when glutamine is the substrate; GTP has no effect on the reaction when ammonia is the substrate. The allosteric effector GTP functions by stabilizing the protein conformation that binds the tetrahedral intermediate(s) formed during glutamine hydrolysis. Inhibited by the product CTP, via allosteric rather than competitive inhibition. Catalyzes the ATP-dependent amination of UTP to CTP with either L-glutamine or ammonia as the source of nitrogen. Regulates intracellular CTP levels through interactions with the four ribonucleotide triphosphates. The protein is CTP synthase of Corynebacterium glutamicum (strain R).